Reading from the N-terminus, the 58-residue chain is Large ribosomal subunit protein bL32 (58 aa).

It belongs to the bacterial ribosomal protein bL32 family.

In Carboxydothermus hydrogenoformans (strain ATCC BAA-161 / DSM 6008 / Z-2901), this protein is Large ribosomal subunit protein bL32.